The primary structure comprises 277 residues: Exosome complex component Rrp42 (277 aa).

It belongs to the RNase PH family. Rrp42 subfamily. In terms of assembly, component of the archaeal exosome complex. Forms a hexameric ring-like arrangement composed of 3 Rrp41-Rrp42 heterodimers. The hexameric ring associates with a trimer of Rrp4 and/or Csl4 subunits.

The protein localises to the cytoplasm. Its function is as follows. Non-catalytic component of the exosome, which is a complex involved in RNA degradation. Contributes to the structuring of the Rrp41 active site. The chain is Exosome complex component Rrp42 from Pyrococcus furiosus (strain ATCC 43587 / DSM 3638 / JCM 8422 / Vc1).